Here is a 302-residue protein sequence, read N- to C-terminus: 33 kDa chaperonin (302 aa).

2 disulfides stabilise this stretch: cysteine 234/cysteine 236 and cysteine 267/cysteine 270.

It belongs to the HSP33 family. Under oxidizing conditions two disulfide bonds are formed involving the reactive cysteines. Under reducing conditions zinc is bound to the reactive cysteines and the protein is inactive.

The protein resides in the cytoplasm. In terms of biological role, redox regulated molecular chaperone. Protects both thermally unfolding and oxidatively damaged proteins from irreversible aggregation. Plays an important role in the bacterial defense system toward oxidative stress. In Neisseria gonorrhoeae (strain ATCC 700825 / FA 1090), this protein is 33 kDa chaperonin.